The primary structure comprises 473 residues: 6-phospho-beta-glucosidase (473 aa).

Glu-174 serves as the catalytic Proton donor. The Nucleophile role is filled by Glu-366.

This sequence belongs to the glycosyl hydrolase 1 family.

The catalysed reaction is 6-phospho-beta-D-glucosyl-(1-&gt;4)-D-glucose + H2O = D-glucose 6-phosphate + D-glucose. The protein is 6-phospho-beta-glucosidase (abgA) of Clostridium longisporum.